The sequence spans 333 residues: Acyl-CoA wax alcohol acyltransferase 2 (333 aa).

The next 3 helical transmembrane spans lie at 15 to 35, 38 to 58, and 130 to 150; these read VFAL…VIIV, YLVV…WLAF, and TFPG…VPFL.

This sequence belongs to the diacylglycerol acyltransferase family. In terms of assembly, monomer. Expressed in Mueller cells of the retina (at protein level). Abundant in tissues rich in sebaceous glands such as the preputial gland and eyelid.

It localises to the endoplasmic reticulum membrane. The catalysed reaction is a long chain fatty alcohol + a fatty acyl-CoA = a wax ester + CoA. The enzyme catalyses all-trans-retinol + an acyl-CoA = an all-trans-retinyl ester + CoA. It carries out the reaction an acyl-CoA + a 1,2-diacyl-sn-glycerol = a triacyl-sn-glycerol + CoA. It catalyses the reaction 9-cis-retinol + a fatty acyl-CoA = 9-cis-retinyl ester + CoA. The catalysed reaction is 11-cis-retinol + a fatty acyl-CoA = 11-cis-retinyl ester + CoA. The enzyme catalyses 13-cis-retinol + a fatty acyl-CoA = 13-cis-retinyl ester + CoA. It carries out the reaction a 1-acylglycerol + an acyl-CoA = a 1,2-diacylglycerol + CoA. It catalyses the reaction 1-O-alkylglycerol + an acyl-CoA = 1-O-alkyl-3-acylglycerol + CoA. The catalysed reaction is a 2-acylglycerol + an acyl-CoA = a 1,2-diacyl-sn-glycerol + CoA. The enzyme catalyses 2-(9Z-octadecenoyl)-glycerol + hexadecanoyl-CoA = 1-hexadecanoyl-2-(9Z-octadecenoyl)-sn-glycerol + CoA. It carries out the reaction 1,2-di-(9Z-octadecenoyl)-sn-glycerol + hexadecanoyl-CoA = 1,2-di-(9Z)-octadecenoyl-3-hexadecanoyl-sn-glycerol + CoA. It catalyses the reaction hexadecan-1-ol + hexadecanoyl-CoA = hexadecanyl hexadecanoate + CoA. The catalysed reaction is hexadecane-1,2-diol + hexadecanoyl-CoA = 2-hydroxyhexadecyl hexadecanoate + CoA. The enzyme catalyses all-trans-retinol + hexadecanoyl-CoA = all-trans-retinyl hexadecanoate + CoA. It carries out the reaction 1,2-di-(9Z-octadecenoyl)-sn-glycerol + (9Z)-octadecenoyl-CoA = 1,2,3-tri-(9Z-octadecenoyl)-glycerol + CoA. It catalyses the reaction hexadecan-1-ol + (9Z)-octadecenoyl-CoA = hexadecanyl (9Z)-octadecenoate + CoA. The catalysed reaction is (9Z)-hexadecen-1-ol + (9Z)-octadecenoyl-CoA = 1-O-(9Z)-hexadecenyl (9Z)-octadecenoate + CoA. The enzyme catalyses octadecan-1-ol + (9Z)-octadecenoyl-CoA = 1-O-octadecyl (9Z)-octadecenoate + CoA. It carries out the reaction (9Z)-octadecen-1-ol + (9Z)-octadecenoyl-CoA = 1-O-(9Z)-octadecenyl (9Z)-octadecenoate + CoA. It catalyses the reaction hexadecan-1-ol + (9Z)-hexadecenoyl-CoA = 1-O-hexadecyl (9Z)-hexadecenoate + CoA. The catalysed reaction is hexadecan-1-ol + octadecanoyl-CoA = hexadecanyl octadecanoate + CoA. The enzyme catalyses 11-cis-retinol + hexadecanoyl-CoA = 11-cis-retinyl hexadecanoate + CoA. It carries out the reaction 1-O-(9Z-octadecenyl)-glycerol + (9Z)-octadecenoyl-CoA = 1-O-(9Z-octadecyl)-3-(9Z-octadecenoyl)-glycerol + CoA. It catalyses the reaction 1-(9Z-octadecenoyl)-glycerol + (9Z)-octadecenoyl-CoA = 1,2-di-(9Z-octadecenoyl)-glycerol + CoA. The catalysed reaction is 11-cis-retinol + tetradecanoyl-CoA = 11-cis-retinyl tetradecanoate + CoA. The enzyme catalyses 9-cis-retinol + tetradecanoyl-CoA = 9-cis-retinyl tetradecanoate + CoA. It carries out the reaction 9-cis-retinol + hexadecanoyl-CoA = 9-cis-retinyl hexadecanoate + CoA. It catalyses the reaction 13-cis-retinol + tetradecanoyl-CoA = 13-cis-retinyl tetradecanoate + CoA. The catalysed reaction is all-trans-retinol + tetradecanoyl-CoA = all-trans-retinyl tetradecanoate + CoA. The enzyme catalyses tetradecan-1-ol + tetradecanoyl-CoA = tetradecanyl tetradecanoate + CoA. Its activity is regulated as follows. 11-cis retinoids act as allosteric modulators of acyl-CoA retinol O-fatty-acyltransferase (ARAT) activity by suppressing esterification of 9-cis, 13-cis, or all-trans retinols concurrently increasing the enzyme specificity toward 11-cis isomer. Its function is as follows. Acyltransferase that catalyzes the formation of ester bonds between fatty alcohols and fatty acyl-CoAs to form wax monoesters. Shows a preference for medium chain acyl-CoAs from C12 to C16 in length and fatty alcohols shorter than C20, as the acyl donor and acceptor, respectively. Also possesses fatty acyl-CoA retinol acyltransferase (ARAT) activity that preferentially esterifies 11-cis-retinol, a chromophore precursor of bleached opsin pigments in cone cells. Shows higher catalytic efficiency toward 11-cis-retinol versus 9-cis-retinol, 13- cis-retinol and all-trans-retinol substrates. This Mus musculus (Mouse) protein is Acyl-CoA wax alcohol acyltransferase 2 (Awat2).